The chain runs to 265 residues: Insulin-like growth factor-binding protein 5 (265 aa).

Residues 1-21 (MEMLLPMCLLLVSLCLGQCQA) form the signal peptide. Residues 24–104 (SFVHCEPCDD…LHGRGVCLNL (81 aa)) form the IGFBP N-terminal domain. Disulfide bonds link Cys-28-Cys-54, Cys-31-Cys-56, Cys-39-Cys-57, Cys-46-Cys-60, Cys-68-Cys-81, and Cys-75-Cys-101. Basic and acidic residues predominate over residues 111–121 (SKIDRESREED). The segment at 111–137 (SKIDRESREEDPTTSETEDIYQSKHRG) is disordered. The Thyroglobulin type-1 domain occupies 182-256 (MGPCRRQVET…IDYVNGDLQC (75 aa)). 3 disulfide bridges follow: Cys-185–Cys-212, Cys-223–Cys-234, and Cys-236–Cys-256.

Its subcellular location is the secreted. IGF-binding proteins prolong the half-life of the IGFs and have been shown to either inhibit or stimulate the growth promoting effects of the IGFs on cell culture. They alter the interaction of IGFs with their cell surface receptors. Promotes anterior neural development by stimulating insulin growth factor (IGF) signaling via IGF receptors. The chain is Insulin-like growth factor-binding protein 5 from Xenopus laevis (African clawed frog).